A 523-amino-acid polypeptide reads, in one-letter code: 2-isopropylmalate synthase (523 aa).

The Pyruvate carboxyltransferase domain occupies 5 to 267 (VIIFDTTLRD…HTAINHQEIW (263 aa)). Residues Asp-14, His-202, His-204, and Asn-238 each coordinate Mn(2+). Residues 392 to 523 (RLDYFSVQSG…QHNENNKETV (132 aa)) form a regulatory domain region.

The protein belongs to the alpha-IPM synthase/homocitrate synthase family. LeuA type 1 subfamily. Homodimer. The cofactor is Mn(2+).

It is found in the cytoplasm. It catalyses the reaction 3-methyl-2-oxobutanoate + acetyl-CoA + H2O = (2S)-2-isopropylmalate + CoA + H(+). It functions in the pathway amino-acid biosynthesis; L-leucine biosynthesis; L-leucine from 3-methyl-2-oxobutanoate: step 1/4. Functionally, catalyzes the condensation of the acetyl group of acetyl-CoA with 3-methyl-2-oxobutanoate (2-ketoisovalerate) to form 3-carboxy-3-hydroxy-4-methylpentanoate (2-isopropylmalate). This Shigella sonnei (strain Ss046) protein is 2-isopropylmalate synthase.